The following is a 596-amino-acid chain: Proton channel OTOP3 (596 aa).

Low complexity predominate over residues 1-21 (MGRGARAAAAQSRWGRASRAS). A disordered region spans residues 1 to 59 (MGRGARAAAAQSRWGRASRASVSPGRTIRSAPAVGEAQETEAAPEKENRVDVGAEERAA). The Cytoplasmic segment spans residues 1–88 (MGRGARAAAA…RDRQAQKAGQ (88 aa)). 2 positions are modified to phosphoserine: serine 21 and serine 23. A compositionally biased stretch (basic and acidic residues) spans 43–59 (APEKENRVDVGAEERAA). Residues 89 to 109 (LFSGLLALNVVFLGGAFICSM) traverse the membrane as a helical segment. Over 110 to 119 (IFNKVAVTLG) the chain is Extracellular. A helical membrane pass occupies residues 120-143 (DVWILLATLKVLSLLWLLYYVAST). The Cytoplasmic portion of the chain corresponds to 144-159 (TRRPHAVLYQDPHAGP). A helical transmembrane segment spans residues 160–181 (LWVRGSLVLFGSCTFCLNIFRV). The Extracellular segment spans residues 182–193 (GYDVSHIRCKSQ). Residues 194–217 (LDLVFSVIEMVFIGVQTWVLWKHC) form a helical membrane-spanning segment. The Cytoplasmic portion of the chain corresponds to 218 to 225 (KDCVRVQT). The chain crosses the membrane as a helical span at residues 226 to 248 (NFTRCGLMLTLATNLLLWVLAVT). The Extracellular segment spans residues 249–295 (NDSMHREIEAELGILMEKSTGNETNTCLCLNATACEAFRRGFLMLYP). Residues 296 to 312 (FSTEYCLICCAVLFVMW) traverse the membrane as a helical segment. Residues 313 to 338 (KNVGRHVAPHMGAHPATAPFHLHGAI) lie on the Cytoplasmic side of the membrane. The helical transmembrane segment at 339–358 (FGPLLGLLVLLAGVCVFVLF) threads the bilayer. Residues 359 to 372 (QIEASGPAIACQYF) are Extracellular-facing. The helical transmembrane segment at 373–395 (TLYYAFYVAVLPTMSLACLAGTA) threads the bilayer. Residues 396 to 413 (IHGLEERELDTVKNPTRS) lie on the Cytoplasmic side of the membrane. Residues 414–435 (LDVVLLMGAALGQMGIAYFSIV) traverse the membrane as a helical segment. Over 436–446 (AIVAKRPHELL) the chain is Extracellular. The chain crosses the membrane as a helical span at residues 447–469 (NRLILAYSLLLILQHIAQNLFII). Over 470–529 (EGLHRRPLWETVPEGLAGKQEAEPPRRGSLLELGQGLQRASLAYIHSYSHLNWKRRALKE) the chain is Cytoplasmic. The helical transmembrane segment at 530–547 (ISLFLILCNITLWMMPAF) threads the bilayer. The Extracellular segment spans residues 548-566 (GIHPEFENGLEKDFYGYQI). Residues 567–589 (WFAIVNFGLPLGVFYRMHSVGGL) traverse the membrane as a helical segment. Residues 590–596 (VEVYLGA) lie on the Cytoplasmic side of the membrane.

Belongs to the otopetrin family. As to quaternary structure, homodimer.

The protein localises to the cell membrane. It carries out the reaction H(+)(in) = H(+)(out). Its activity is regulated as follows. Activated by extracellular acidification. Activated by Zn(2+) under non-acidic conditions. In terms of biological role, proton-selective channel gated by extracellular protons. In Homo sapiens (Human), this protein is Proton channel OTOP3.